An 80-amino-acid polypeptide reads, in one-letter code: Large ribosomal subunit protein bL31 (80 aa).

Positions 16, 18, 38, and 41 each coordinate Zn(2+).

Belongs to the bacterial ribosomal protein bL31 family. Type A subfamily. Part of the 50S ribosomal subunit. The cofactor is Zn(2+).

Binds the 23S rRNA. This is Large ribosomal subunit protein bL31 from Rhodococcus jostii (strain RHA1).